A 142-amino-acid polypeptide reads, in one-letter code: 3-hydroxyacyl-[acyl-carrier-protein] dehydratase FabZ (142 aa).

Histidine 49 is a catalytic residue.

Belongs to the thioester dehydratase family. FabZ subfamily.

It is found in the cytoplasm. It carries out the reaction a (3R)-hydroxyacyl-[ACP] = a (2E)-enoyl-[ACP] + H2O. Its function is as follows. Involved in unsaturated fatty acids biosynthesis. Catalyzes the dehydration of short chain beta-hydroxyacyl-ACPs and long chain saturated and unsaturated beta-hydroxyacyl-ACPs. This Deinococcus geothermalis (strain DSM 11300 / CIP 105573 / AG-3a) protein is 3-hydroxyacyl-[acyl-carrier-protein] dehydratase FabZ.